Consider the following 90-residue polypeptide: Small ribosomal subunit protein uS15c (90 aa).

It belongs to the universal ribosomal protein uS15 family. As to quaternary structure, part of the 30S ribosomal subunit.

Its subcellular location is the plastid. It localises to the chloroplast. This Platanus occidentalis (Sycamore) protein is Small ribosomal subunit protein uS15c (rps15).